The primary structure comprises 702 residues: Phosphoglycerol transferase I (702 aa).

3 helical membrane-spanning segments follow: residues 2–22 (HWML…SPRL), 71–91 (FSGY…PLLL), and 103–123 (GGAV…ASPL).

This sequence belongs to the OpgB family.

It is found in the cell inner membrane. It catalyses the reaction a phosphatidylglycerol + a membrane-derived-oligosaccharide D-glucose = a 1,2-diacyl-sn-glycerol + a membrane-derived-oligosaccharide 6-(glycerophospho)-D-glucose.. Its pathway is glycan metabolism; osmoregulated periplasmic glucan (OPG) biosynthesis. Transfers a phosphoglycerol residue from phosphatidylglycerol to the membrane-bound nascent glucan backbones. This is Phosphoglycerol transferase I from Xanthomonas euvesicatoria pv. vesicatoria (strain 85-10) (Xanthomonas campestris pv. vesicatoria).